We begin with the raw amino-acid sequence, 296 residues long: Homoserine kinase (296 aa).

84-94 (PLARGLGSSSS) serves as a coordination point for ATP.

This sequence belongs to the GHMP kinase family. Homoserine kinase subfamily.

The protein resides in the cytoplasm. The catalysed reaction is L-homoserine + ATP = O-phospho-L-homoserine + ADP + H(+). It participates in amino-acid biosynthesis; L-threonine biosynthesis; L-threonine from L-aspartate: step 4/5. Catalyzes the ATP-dependent phosphorylation of L-homoserine to L-homoserine phosphate. This Lactococcus lactis subsp. cremoris (Streptococcus cremoris) protein is Homoserine kinase (thrB).